Consider the following 137-residue polypeptide: Kunitz-type trypsin inhibitor alpha chain (137 aa).

C40 and C86 are disulfide-bonded.

The protein belongs to the protease inhibitor I3 (leguminous Kunitz-type inhibitor) family. In terms of assembly, heterodimer of an alpha and a beta chain linked by a disulfide bond.

In terms of biological role, inhibition of trypsin. The protein is Kunitz-type trypsin inhibitor alpha chain of Neltuma juliflora (Mesquite).